A 116-amino-acid chain; its full sequence is T cell receptor alpha variable 14/delta variable 4 (116 aa).

The first 21 residues, 1–21 (MSLSSLLKVVTASLWLGPGIA), serve as a signal peptide directing secretion. An Ig-like domain is found at 22–116 (QKITQTQPGM…SAMYFCAMRE (95 aa)). Cys-43 and Cys-112 are oxidised to a cystine. Asn-78 is a glycosylation site (N-linked (GlcNAc...) asparagine).

As to quaternary structure, alpha-beta TR is a heterodimer composed of an alpha and beta chain; disulfide-linked. The alpha-beta TR is associated with the transmembrane signaling CD3 coreceptor proteins to form the TR-CD3 (TcR or TCR). The assembly of alpha-beta TR heterodimers with CD3 occurs in the endoplasmic reticulum where a single alpha-beta TR heterodimer associates with one CD3D-CD3E heterodimer, one CD3G-CD3E heterodimer and one CD247 homodimer forming a stable octameric structure. CD3D-CD3E and CD3G-CD3E heterodimers preferentially associate with TR alpha and TR beta chains, respectively. The association of the CD247 homodimer is the last step of TcR assembly in the endoplasmic reticulum and is required for transport to the cell surface.

It is found in the cell membrane. Its function is as follows. V region of the variable domain of T cell receptor (TR) alpha chain that participates in the antigen recognition. Alpha-beta T cell receptors are antigen specific receptors which are essential to the immune response and are present on the cell surface of T lymphocytes. Recognize peptide-major histocompatibility (MH) (pMH) complexes that are displayed by antigen presenting cells (APC), a prerequisite for efficient T cell adaptive immunity against pathogens. Binding of alpha-beta TR to pMH complex initiates TR-CD3 clustering on the cell surface and intracellular activation of LCK that phosphorylates the ITAM motifs of CD3G, CD3D, CD3E and CD247 enabling the recruitment of ZAP70. In turn ZAP70 phosphorylates LAT, which recruits numerous signaling molecules to form the LAT signalosome. The LAT signalosome propagates signal branching to three major signaling pathways, the calcium, the mitogen-activated protein kinase (MAPK) kinase and the nuclear factor NF-kappa-B (NF-kB) pathways, leading to the mobilization of transcription factors that are critical for gene expression and essential for T cell growth and differentiation. The T cell repertoire is generated in the thymus, by V-(D)-J rearrangement. This repertoire is then shaped by intrathymic selection events to generate a peripheral T cell pool of self-MH restricted, non-autoaggressive T cells. Post-thymic interaction of alpha-beta TR with the pMH complexes shapes TR structural and functional avidity. The protein is T cell receptor alpha variable 14/delta variable 4 of Homo sapiens (Human).